We begin with the raw amino-acid sequence, 193 residues long: Auxin-induced protein 22D (193 aa).

Residues A16–K68 are disordered. Positions L19–L23 match the EAR-like (transcriptional repression) motif. A PB1 domain is found at G97–G184.

Belongs to the Aux/IAA family. In terms of assembly, homodimers and heterodimers.

Its subcellular location is the nucleus. In terms of biological role, aux/IAA proteins are short-lived transcriptional factors that function as repressors of early auxin response genes at low auxin concentrations. Repression is thought to result from the interaction with auxin response factors (ARFs), proteins that bind to the auxin-responsive promoter element (AuxRE). Formation of heterodimers with ARF proteins may alter their ability to modulate early auxin response genes expression. The chain is Auxin-induced protein 22D (AUX22D) from Vigna radiata var. radiata (Mung bean).